A 138-amino-acid polypeptide reads, in one-letter code: Acidic phospholipase A2 5 (138 aa).

The N-terminal stretch at 1–16 (MRTLWIVAVWLIGVEG) is a signal peptide. 7 disulfide bridges follow: C42–C131, C44–C60, C59–C111, C65–C138, C66–C104, C73–C97, and C91–C102. Residues Y43, G45, and G47 each contribute to the Ca(2+) site. H63 is a catalytic residue. D64 contacts Ca(2+). The active site involves D105.

It belongs to the phospholipase A2 family. Group II subfamily. D49 sub-subfamily. It depends on Ca(2+) as a cofactor. In terms of tissue distribution, expressed by the venom gland.

Its subcellular location is the secreted. The enzyme catalyses a 1,2-diacyl-sn-glycero-3-phosphocholine + H2O = a 1-acyl-sn-glycero-3-phosphocholine + a fatty acid + H(+). Functionally, PLA2 catalyzes the calcium-dependent hydrolysis of the 2-acyl groups in 3-sn-phosphoglycerides. This Echis ocellatus (Ocellated saw-scaled viper) protein is Acidic phospholipase A2 5.